A 681-amino-acid polypeptide reads, in one-letter code: Mating-type protein beta1-1 (681 aa).

The segment at residues 165 to 227 is a DNA-binding region (homeobox; TALE-type); sequence DKNEPTSPTP…DARRRIGWNE (63 aa). Residues 307-318 are compositionally biased toward basic and acidic residues; the sequence is LKNDEARRKREA. Disordered regions lie at residues 307-341, 353-381, and 394-466; these read LKND…SPAS, AIDS…SPLC, and SPVK…SDPF. Positions 413 to 430 are enriched in low complexity; the sequence is TSAAPSPQPSLLPKLTPT.

Belongs to the TALE/M-ATYP homeobox family. May dimerize.

It localises to the nucleus. In terms of biological role, has a major regulatory role in sexual and asexual development. It may bind DNA itself or it may have a role in preventing DNA-binding of another protein. The chain is Mating-type protein beta1-1 from Coprinopsis cinerea (Inky cap fungus).